The following is a 20-amino-acid chain: Expansin-B (20 aa).

Residues 1 to 20 (GPPKVAPGKXISASFGGEWL) are disordered.

It belongs to the expansin family. Expansin B subfamily.

It localises to the secreted. It is found in the cell wall. Its subcellular location is the membrane. In terms of biological role, may aid fertilization by loosening the cell wall of the stigma and style, thereby facilitating penetration of the pollen tube. Acts selectively on grass cell walls, which are relatively poor in pectins and xyloglucans and rich in glucuronoarabinoxylans and (1-3),(1-4)-beta-D-glucans, when compared with cell walls of other angiosperms, including other monocots. This chain is Expansin-B, found in Paspalum notatum (Bahia grass).